We begin with the raw amino-acid sequence, 352 residues long: Rhodopsin (352 aa).

At 1 to 36 the chain is on the extracellular side; it reads MNGTEGPDFYIPFSNKTGVVRSPFEYPQYYLAEPWK. N-linked (GlcNAc...) asparagine glycosylation is found at Asn-2 and Asn-15. A helical transmembrane segment spans residues 37 to 61; that stretch reads YSALAAYMFMLIILGFPINFLTLYV. At 62-73 the chain is on the cytoplasmic side; that stretch reads TVQHKKLRSPLN. A helical membrane pass occupies residues 74 to 96; it reads YILLNLAVADLFMVLGGFTTTLY. At 97 to 110 the chain is on the extracellular side; the sequence is TSMNGYFVFGVTGC. The cysteines at positions 110 and 187 are disulfide-linked. The chain crosses the membrane as a helical span at residues 111-133; the sequence is YFEGFFATLGGEVALWCLVVLAI. A 'Ionic lock' involved in activated form stabilization motif is present at residues 134-136; sequence ERY. At 134-152 the chain is on the cytoplasmic side; that stretch reads ERYIVVCKPMSNFRFGENH. A helical transmembrane segment spans residues 153–173; the sequence is AIMGVVFTWIMALTCAAPPLV. Topologically, residues 174–202 are extracellular; the sequence is GWSRYIPEGMQCSCGVDYYTLKPEVNNES. A helical transmembrane segment spans residues 203–224; sequence FVIYMFVVHFAIPLAVIFFCYG. The Cytoplasmic portion of the chain corresponds to 225 to 252; the sequence is RLVCTVKEAAAQQQESATTQKAEKEVTR. Residues 253–274 traverse the membrane as a helical segment; sequence MVIIMVVSFLICWVPYASVAFY. The Extracellular segment spans residues 275–286; that stretch reads IFSNQGSDFGPV. Residues 287–308 traverse the membrane as a helical segment; it reads FMTIPAFFAKSSAIYNPVIYIV. Residue Lys-296 is modified to N6-(retinylidene)lysine. At 309–352 the chain is on the cytoplasmic side; it reads MNKQFRNCMITTLCCGKNPLGDDETATGSKTETSSVSTSQVSPA. 2 S-palmitoyl cysteine lipidation sites follow: Cys-322 and Cys-323. Positions 332-352 are disordered; it reads ETATGSKTETSSVSTSQVSPA. The segment covering 335–352 has biased composition (low complexity); the sequence is TGSKTETSSVSTSQVSPA.

The protein belongs to the G-protein coupled receptor 1 family. Opsin subfamily. In terms of processing, contains one covalently linked retinal chromophore. Upon light absorption, the covalently bound 11-cis-retinal is converted to all-trans-retinal. After hydrolysis of the Schiff base and release of the covalently bound all-trans-retinal, active rhodopsin is regenerated by binding of a fresh molecule of 11-cis-retinal. In terms of tissue distribution, expressed in rod-shaped photoreceptor cells in the retina that mediate vision in dim ligh (at protein level).

The protein localises to the membrane. It is found in the cell projection. The protein resides in the cilium. It localises to the photoreceptor outer segment. In terms of biological role, photoreceptor required for image-forming vision at low light intensity. Required for photoreceptor cell viability after birth. Light-induced isomerization of 11-cis to all-trans retinal triggers a conformational change that activates signaling via G-proteins. Subsequent receptor phosphorylation mediates displacement of the bound G-protein alpha subunit by arrestin and terminates signaling. The sequence is that of Rhodopsin (RHO) from Alligator mississippiensis (American alligator).